The sequence spans 96 residues: Small ribosomal subunit protein uS19 (96 aa).

Residues 1 to 30 (MARSIKKGPFADKHLTKKVEDANKGNKKSV) form a disordered region. Basic and acidic residues predominate over residues 9–24 (PFADKHLTKKVEDANK).

Belongs to the universal ribosomal protein uS19 family.

Functionally, protein S19 forms a complex with S13 that binds strongly to the 16S ribosomal RNA. The chain is Small ribosomal subunit protein uS19 from Anaeromyxobacter sp. (strain Fw109-5).